The primary structure comprises 21 residues: Cupiennin-6d (21 aa).

A Serine amide modification is found at Ser-21.

Expressed by the venom gland.

It localises to the secreted. The chain is Cupiennin-6d from Cupiennius salei (American wandering spider).